Here is a 94-residue protein sequence, read N- to C-terminus: Co-chaperonin GroES (94 aa).

Belongs to the GroES chaperonin family. In terms of assembly, heptamer of 7 subunits arranged in a ring. Interacts with the chaperonin GroEL.

It localises to the cytoplasm. Functionally, together with the chaperonin GroEL, plays an essential role in assisting protein folding. The GroEL-GroES system forms a nano-cage that allows encapsulation of the non-native substrate proteins and provides a physical environment optimized to promote and accelerate protein folding. GroES binds to the apical surface of the GroEL ring, thereby capping the opening of the GroEL channel. The sequence is that of Co-chaperonin GroES from Streptococcus agalactiae serotype III (strain NEM316).